The primary structure comprises 110 residues: Iron-sulfur cluster assembly protein CyaY (110 aa).

It belongs to the frataxin family.

In terms of biological role, involved in iron-sulfur (Fe-S) cluster assembly. May act as a regulator of Fe-S biogenesis. The polypeptide is Iron-sulfur cluster assembly protein CyaY (Pseudomonas putida (strain ATCC 700007 / DSM 6899 / JCM 31910 / BCRC 17059 / LMG 24140 / F1)).